The sequence spans 25 residues: Tubulin alpha chain (25 aa).

Residue Q11 participates in GTP binding.

It belongs to the tubulin family. Dimer of alpha and beta chains. A typical microtubule is a hollow water-filled tube with an outer diameter of 25 nm and an inner diameter of 15 nM. Alpha-beta heterodimers associate head-to-tail to form protofilaments running lengthwise along the microtubule wall with the beta-tubulin subunit facing the microtubule plus end conferring a structural polarity. Microtubules usually have 13 protofilaments but different protofilament numbers can be found in some organisms and specialized cells. It depends on Mg(2+) as a cofactor.

It localises to the cytoplasm. It is found in the cytoskeleton. The catalysed reaction is GTP + H2O = GDP + phosphate + H(+). Its function is as follows. Tubulin is the major constituent of microtubules, a cylinder consisting of laterally associated linear protofilaments composed of alpha- and beta-tubulin heterodimers. Microtubules grow by the addition of GTP-tubulin dimers to the microtubule end, where a stabilizing cap forms. Below the cap, tubulin dimers are in GDP-bound state, owing to GTPase activity of alpha-tubulin. In Leptomonas seymouri, this protein is Tubulin alpha chain.